A 645-amino-acid polypeptide reads, in one-letter code: MNETECEDLIKSVKWTEPANLISLAVLEFINVLVIGGNCLVIAAVFCSNKLRSVTNFFIVNLAVADLLVGLAVLPFSATWEVFKVWIFGDLWCRIWLAVDVWMCTASILNLCAISLDRYVAVTRPVTYPSIMSTKKAKSLIAGIWVLSFFICFPPLVGWKDQKAVIQPTYPKGNHTLYYTTTMSSSEDGQLGLDSIKDQGEASLPPSPPHIGNGNAYNPYDPGFAPIDGSAEIRIAAIDSTSTSTTATTTTTASSSSTTETEMDLDLLNAPPQNRPQTISGSCPWKCELTNDRGYVLYSALGSFYIPMFVMLFFYWRIYRAAVRTTRAINQGFKTTKGSKGIGSRFEEQRLTLRIHRGRGSNQQDSMHSNGSTQSTTTTLGTPSPERLSKYATRRLHHHDKIKISVSYPSSENISELAGHGDVGHERRQSGNALFAVHYNGTNGRESTESQLYRQQQQHGVASSCYLQVGKGLPELARRQSNTSEAGGSGHSRPANKKMGRRNIKAQVKRFRMETKAAKTLAIIVGMFIFCWCPFFTMYIIRPFCQDCVDPLLFSVLFWLGYCNSAVNPMIYALFSKDFRFAFKRIICRCFCSRQSVSLKSSRRGSDMSAIRIRARTPSITPSAAAHSFGDESELHHSEMSNDPR.

Residues 1–25 (MNETECEDLIKSVKWTEPANLISLA) are Extracellular-facing. N-linked (GlcNAc...) asparagine glycosylation occurs at asparagine 2. The chain crosses the membrane as a helical span at residues 26–46 (VLEFINVLVIGGNCLVIAAVF). The Cytoplasmic portion of the chain corresponds to 47–56 (CSNKLRSVTN). The helical transmembrane segment at 57–77 (FFIVNLAVADLLVGLAVLPFS) threads the bilayer. The Extracellular segment spans residues 78-94 (ATWEVFKVWIFGDLWCR). Cysteine 93 and cysteine 287 are joined by a disulfide. The chain crosses the membrane as a helical span at residues 95–115 (IWLAVDVWMCTASILNLCAIS). Over 116–138 (LDRYVAVTRPVTYPSIMSTKKAK) the chain is Cytoplasmic. A helical membrane pass occupies residues 139–159 (SLIAGIWVLSFFICFPPLVGW). At 160–295 (KDQKAVIQPT…KCELTNDRGY (136 aa)) the chain is on the extracellular side. Asparagine 174 is a glycosylation site (N-linked (GlcNAc...) asparagine). The segment at 190–212 (QLGLDSIKDQGEASLPPSPPHIG) is disordered. A helical transmembrane segment spans residues 296-316 (VLYSALGSFYIPMFVMLFFYW). Topologically, residues 317-520 (RIYRAAVRTT…FRMETKAAKT (204 aa)) are cytoplasmic. Disordered stretches follow at residues 358-386 (GRGS…PSPE) and 479-500 (RQSN…KKMG). The segment covering 369–385 (SNGSTQSTTTTLGTPSP) has biased composition (low complexity). Residues 521-541 (LAIIVGMFIFCWCPFFTMYII) form a helical membrane-spanning segment. The Extracellular segment spans residues 542–551 (RPFCQDCVDP). A helical membrane pass occupies residues 552-572 (LLFSVLFWLGYCNSAVNPMIY). The Cytoplasmic portion of the chain corresponds to 573–645 (ALFSKDFRFA…HHSEMSNDPR (73 aa)). Residues 621-645 (TPSAAAHSFGDESELHHSEMSNDPR) are disordered. Residues 629-645 (FGDESELHHSEMSNDPR) show a composition bias toward basic and acidic residues.

This sequence belongs to the G-protein coupled receptor 1 family. In terms of tissue distribution, highly enriched in mushroom body neuropil and in the ellipsoid body (at protein level). Expressed in oviduct epithelium (at protein level). Expressed in the adult and larval brain, thoracic and abdominal ganglia, terminal cells of the larval tracheal system, muscle, mature eggs and reproductive system.

The protein resides in the cell membrane. In terms of biological role, receptor for octopamine (OA) which is a neurotransmitter, neurohormone and neuromodulator in invertebrates. Stimulates intracellular accumulation of cAMP and Ca(2+) following ligand binding. Required for ovulation. Following activation on mature follicle cells by OA, induces activity of the metalloprotease Mmp2 which leads to breakdown of the posterior follicle wall, resulting in ovulation. Ligand binding probably also leads to activation of CamKII which is also required for ovulation. Modulates sleep/wake behavior by acting in neurons of the pars intercerebralis to promote wakefulness. Plays a role in courtship conditioning where the courtship behavior of males rejected by already mated females is inhibited with further females. Required in the mushroom body for appetitive olfactory learning. Specifically conveys the short-term reinforcing effects of sweet taste. In insulin-producing cells of the brain, plays a role in inhibiting transcription of insulin-like peptide Ilp3. Also plays a role in social behavior by modulating male agression. The protein is Octopamine receptor Oamb of Drosophila melanogaster (Fruit fly).